The primary structure comprises 487 residues: Cell wall protein TIR4 (487 aa).

An N-terminal signal peptide occupies residues M1–A22. Tandem repeats lie at residues S137–V148, S149–V160, S161–V172, S173–A184, S185–V196, S197–A208, S209–V220, S221–V232, S233–A244, S245–V256, and S257–T268. The tract at residues S137 to T268 is 11 X 12 AA approximate tandem repeats, Ser-rich. The tract at residues E206–S299 is disordered. N327, N348, N368, N403, and N404 each carry an N-linked (GlcNAc...) asparagine glycan. A lipid anchor (GPI-anchor amidated asparagine) is attached at N465. The propeptide at G466 to L487 is removed in mature form.

This sequence belongs to the SRP1/TIP1 family. The GPI-anchor is attached to the protein in the endoplasmic reticulum and serves to target the protein to the cell surface. There, the glucosamine-inositol phospholipid moiety is cleaved off and the GPI-modified mannoprotein is covalently attached via its lipidless GPI glycan remnant to the 1,6-beta-glucan of the outer cell wall layer.

It localises to the secreted. It is found in the cell wall. The protein localises to the membrane. Functionally, component of the cell wall. Required for anaerobic growth. The sequence is that of Cell wall protein TIR4 (TIR4) from Saccharomyces cerevisiae (strain ATCC 204508 / S288c) (Baker's yeast).